The sequence spans 355 residues: uncharacterized protein (355 aa).

The N-terminal stretch at 1–27 (MESPIRTARRTLPLLIGATCLVLALTG) is a signal peptide. The N-palmitoyl cysteine moiety is linked to residue C28. Residue C28 is the site of S-diacylglycerol cysteine attachment. The interval 33–53 (GPAQARPTPSASTSPKQAPAL) is disordered. The span at 39-48 (PTPSASTSPK) shows a compositional bias: polar residues.

Its subcellular location is the cell membrane. This is an uncharacterized protein from Streptomyces coelicolor (strain ATCC BAA-471 / A3(2) / M145).